Reading from the N-terminus, the 459-residue chain is Methionine aminopeptidase 2-1 (459 aa).

Basic and acidic residues predominate over residues 1 to 12 (MGSKSPEDHRQG). The segment at 1–79 (MGSKSPEDHR…RKRNKKKSKK (79 aa)) is disordered. A compositionally biased stretch (acidic residues) spans 43–54 (GQDEDGDDDDDE). Residues 67–79 (KKKRKRNKKKSKK) are compositionally biased toward basic residues. His210 lines the substrate pocket. 3 residues coordinate a divalent metal cation: Asp231, Asp242, and His311. His319 contacts substrate. 2 residues coordinate a divalent metal cation: Glu344 and Glu440.

The protein belongs to the peptidase M24A family. Methionine aminopeptidase eukaryotic type 2 subfamily. It depends on Co(2+) as a cofactor. The cofactor is Zn(2+). Mn(2+) is required as a cofactor. Fe(2+) serves as cofactor.

Its subcellular location is the cytoplasm. The enzyme catalyses Release of N-terminal amino acids, preferentially methionine, from peptides and arylamides.. Functionally, cotranslationally removes the N-terminal methionine from nascent proteins. The N-terminal methionine is often cleaved when the second residue in the primary sequence is small and uncharged (Met-Ala-, Cys, Gly, Pro, Ser, Thr, or Val). The chain is Methionine aminopeptidase 2-1 from Pyrenophora tritici-repentis (strain Pt-1C-BFP) (Wheat tan spot fungus).